Reading from the N-terminus, the 274-residue chain is tRNA-cytidine(32) 2-sulfurtransferase (274 aa).

The PP-loop motif motif lies at 40–45 (SGGKDS). Cys-115, Cys-118, and Cys-206 together coordinate [4Fe-4S] cluster.

It belongs to the TtcA family. In terms of assembly, homodimer. Mg(2+) serves as cofactor. Requires [4Fe-4S] cluster as cofactor.

Its subcellular location is the cytoplasm. It carries out the reaction cytidine(32) in tRNA + S-sulfanyl-L-cysteinyl-[cysteine desulfurase] + AH2 + ATP = 2-thiocytidine(32) in tRNA + L-cysteinyl-[cysteine desulfurase] + A + AMP + diphosphate + H(+). It participates in tRNA modification. In terms of biological role, catalyzes the ATP-dependent 2-thiolation of cytidine in position 32 of tRNA, to form 2-thiocytidine (s(2)C32). The sulfur atoms are provided by the cysteine/cysteine desulfurase (IscS) system. This chain is tRNA-cytidine(32) 2-sulfurtransferase, found in Pseudomonas fluorescens (strain ATCC BAA-477 / NRRL B-23932 / Pf-5).